The sequence spans 438 residues: uncharacterized protein (438 aa).

The next 12 membrane-spanning stretches (helical) occupy residues 22–42 (VSPI…GGFG), 59–79 (SAAL…AGLF), 89–109 (IVKG…MLIA), 137–157 (MVMA…TPWG), 174–194 (FFVP…FLAF), 237–257 (LIYL…LGTK), 258–278 (HPSV…YPNV), 292–312 (AITV…LSGT), 330–350 (MGGF…FVLS), 356–376 (FGMV…PVEI), 380–400 (SIMG…VLLV), and 418–438 (AVIT…ITIL).

This sequence belongs to the CitM (TC 2.A.11) transporter family.

The protein resides in the cell membrane. Functionally, transports the free citrate anion. This is an uncharacterized protein from Bacillus subtilis (strain 168).